The primary structure comprises 235 residues: MHSNSTIEKSVNSLADSLVIRQLNTMDYSQVWHAMKDFTDNRDDTTADELWLVEHPAVFTQGQAGKAEHLLVPGDIEVVKVDRGGQVTYHGPGQLVVYVMINLRRKKIGVRQLVTLIENSIVSALTDYDIAAYAKADAPGVYVDEKKIASLGLRVRKGCSFHGLAMNVNMDLSPFLRINPCGYAGLEMVQTADLQGPKDTASASTALVKHLINLLKANNVSHQVGLPNENNKYHE.

One can recognise a BPL/LPL catalytic domain in the interval 44–231 (DTTADELWLV…HQVGLPNENN (188 aa)). Substrate-binding positions include 83-90 (RGGQVTYH), 150-152 (SLG), and 163-165 (GLA). Cysteine 181 serves as the catalytic Acyl-thioester intermediate.

The protein belongs to the LipB family.

Its subcellular location is the cytoplasm. The catalysed reaction is octanoyl-[ACP] + L-lysyl-[protein] = N(6)-octanoyl-L-lysyl-[protein] + holo-[ACP] + H(+). Its pathway is protein modification; protein lipoylation via endogenous pathway; protein N(6)-(lipoyl)lysine from octanoyl-[acyl-carrier-protein]: step 1/2. In terms of biological role, catalyzes the transfer of endogenously produced octanoic acid from octanoyl-acyl-carrier-protein onto the lipoyl domains of lipoate-dependent enzymes. Lipoyl-ACP can also act as a substrate although octanoyl-ACP is likely to be the physiological substrate. This Colwellia psychrerythraea (strain 34H / ATCC BAA-681) (Vibrio psychroerythus) protein is Octanoyltransferase.